Consider the following 289-residue polypeptide: Glycine--tRNA ligase alpha subunit (289 aa).

It belongs to the class-II aminoacyl-tRNA synthetase family. Tetramer of two alpha and two beta subunits.

It is found in the cytoplasm. It carries out the reaction tRNA(Gly) + glycine + ATP = glycyl-tRNA(Gly) + AMP + diphosphate. The polypeptide is Glycine--tRNA ligase alpha subunit (Rickettsia typhi (strain ATCC VR-144 / Wilmington)).